A 29-amino-acid polypeptide reads, in one-letter code: Cyclotide psyleio C (29 aa).

The segment at residues 1–29 (GDLPVCGETCFGGTCNTPGCVCAWPVCTR) is a cross-link (cyclopeptide (Gly-Arg)). 3 disulfides stabilise this stretch: C6–C20, C10–C22, and C15–C27.

This is a cyclic peptide.

Its function is as follows. Probably participates in a plant defense mechanism. The protein is Cyclotide psyleio C of Psychotria leiocarpa.